The sequence spans 136 residues: MLSPKRTKFRKPHRGHLRGKATRGNKIVFGDFALQAQEPCWITSRQIEAGRRVLTRYVRRGGKLWIRIFPDKAVTMRPAGTRMGSGKGAPDYWVAVVHPGKILYEMQGVSETIARQAMRIAAYKMPVKTKFLTKTV.

Belongs to the universal ribosomal protein uL16 family. As to quaternary structure, part of the 50S ribosomal subunit.

The protein resides in the plastid. It localises to the chloroplast. The chain is Large ribosomal subunit protein uL16c from Chlamydomonas reinhardtii (Chlamydomonas smithii).